Consider the following 232-residue polypeptide: MKYLSIISIVALALAGDSPISTDSKGKAPLVARFKKTSKSDIEGTIKFEPANNGTVLVSVDLTGLPSGVGPYPYHVHEKPVPESKNCTATGMHFNPFNGSTTAKTPAALELGDLSGRHGNITSESFEVEYDDSYISLNKDSKAYIGGLSIVVHSNNNTRLNCANITTLDEGDDTASAATWSNSSSSSSSSSKNSTNGSSGSSTSASQGSGAGRAEISGFLAAGIAGVVAALI.

An N-terminal signal peptide occupies residues 1–15 (MKYLSIISIVALALA). Residue Asn53 is glycosylated (N-linked (GlcNAc...) asparagine). Cu cation-binding residues include His75 and His77. A glycan (N-linked (GlcNAc...) asparagine) is linked at Asn86. His93 contributes to the Cu cation binding site. His93 contributes to the Zn(2+) binding site. Residue Asn98 is glycosylated (N-linked (GlcNAc...) asparagine). Asp113 serves as a coordination point for Zn(2+). Asn120 carries an N-linked (GlcNAc...) asparagine glycan. His153 contributes to the Cu cation binding site. 5 N-linked (GlcNAc...) asparagine glycosylation sites follow: Asn156, Asn164, Asn182, Asn193, and Asn196. Positions 174–208 (TASAATWSNSSSSSSSSSKNSTNGSSGSSTSASQG) are enriched in low complexity. A disordered region spans residues 174–211 (TASAATWSNSSSSSSSSSKNSTNGSSGSSTSASQGSGA). A lipid anchor (GPI-anchor amidated serine) is attached at Ser209. A propeptide spans 210 to 232 (GAGRAEISGFLAAGIAGVVAALI) (removed in mature form). A substrate-binding site is contributed by Arg213.

The protein belongs to the Cu-Zn superoxide dismutase family. Cu cation is required as a cofactor. It depends on Zn(2+) as a cofactor. Post-translationally, the GPI-anchor is attached to the protein in the endoplasmic reticulum and serves to target the protein to the cell surface. There, the glucosamine-inositol phospholipid moiety is cleaved off and the GPI-modified mannoprotein is covalently attached via its lipidless GPI glycan remnant to the 1,6-beta-glucan of the outer cell wall layer.

The protein resides in the secreted. It is found in the cell wall. The protein localises to the membrane. It catalyses the reaction 2 superoxide + 2 H(+) = H2O2 + O2. Its function is as follows. Superoxide dismutases serve to convert damaging superoxide radicals, a key form of ROS, to less damaging hydrogen peroxide that can be converted into water by catalase action. Degrades host-derived reactive oxygen species to escape innate immune surveillance. Involved in the occurrence of miconazole-tolerant persisters in biofilms. Persisters are cells that survive high doses of an antimicrobial agent. The protein is Cell surface superoxide dismutase [Cu-Zn] 4 (SOD4) of Candida albicans (strain SC5314 / ATCC MYA-2876) (Yeast).